The sequence spans 1097 residues: DNA-directed RNA polymerase subunit beta (1097 aa).

The disordered stretch occupies residues 1072–1097; that stretch reads QDINPRRNTPSRPTYESLGTSEYEED. The span at 1077-1091 shows a compositional bias: polar residues; it reads RRNTPSRPTYESLGT.

This sequence belongs to the RNA polymerase beta chain family. In terms of assembly, in cyanobacteria the RNAP catalytic core is composed of 2 alpha, 1 beta, 1 beta', 1 gamma and 1 omega subunit. When a sigma factor is associated with the core the holoenzyme is formed, which can initiate transcription.

The enzyme catalyses RNA(n) + a ribonucleoside 5'-triphosphate = RNA(n+1) + diphosphate. DNA-dependent RNA polymerase catalyzes the transcription of DNA into RNA using the four ribonucleoside triphosphates as substrates. The chain is DNA-directed RNA polymerase subunit beta from Prochlorococcus marinus (strain MIT 9215).